The following is a 205-amino-acid chain: Large ribosomal subunit protein uL4 (205 aa).

The tract at residues 48–79 (KAQKSRSDVSGGGKKPWKQKGSGHARAGTTRS) is disordered.

Belongs to the universal ribosomal protein uL4 family. In terms of assembly, part of the 50S ribosomal subunit.

One of the primary rRNA binding proteins, this protein initially binds near the 5'-end of the 23S rRNA. It is important during the early stages of 50S assembly. It makes multiple contacts with different domains of the 23S rRNA in the assembled 50S subunit and ribosome. In terms of biological role, forms part of the polypeptide exit tunnel. This chain is Large ribosomal subunit protein uL4, found in Methylococcus capsulatus (strain ATCC 33009 / NCIMB 11132 / Bath).